The chain runs to 299 residues: tRNA dimethylallyltransferase (299 aa).

11-18 (GPTAVGKT) lines the ATP pocket. Position 13–18 (13–18 (TAVGKT)) interacts with substrate. The tract at residues 36-39 (DSQQ) is interaction with substrate tRNA.

The protein belongs to the IPP transferase family. In terms of assembly, monomer. It depends on Mg(2+) as a cofactor.

The catalysed reaction is adenosine(37) in tRNA + dimethylallyl diphosphate = N(6)-dimethylallyladenosine(37) in tRNA + diphosphate. Functionally, catalyzes the transfer of a dimethylallyl group onto the adenine at position 37 in tRNAs that read codons beginning with uridine, leading to the formation of N6-(dimethylallyl)adenosine (i(6)A). This Streptococcus pyogenes serotype M6 (strain ATCC BAA-946 / MGAS10394) protein is tRNA dimethylallyltransferase.